The sequence spans 168 residues: Type-2 ice-structuring protein (168 aa).

Positions 1 to 17 (MLTVSLLVCAMMALTQA) are cleaved as a signal peptide. Positions 18-34 (DHDGVLKGTATEAGEVS) are excised as a propeptide. Disulfide bonds link cysteine 45–cysteine 56, cysteine 73–cysteine 163, cysteine 107–cysteine 138, cysteine 127–cysteine 149, and cysteine 139–cysteine 155. One can recognise a C-type lectin domain in the interval 52–164 (HGQRCFYSEA…CPASHASICA (113 aa)).

The protein localises to the secreted. Its function is as follows. Has antifreeze activity to protect fish blood from freezing at subzero sea water temperatures. Binds to ice crystals and inhibits their growth. The thermal hysteresis (TH) activity, the ability to lower the blood freezing point, is approximately 0.45 degrees Celsius at 0.15 mM for this protein. The chain is Type-2 ice-structuring protein from Brachyopsis segaliensis (Sea poacher).